Consider the following 583-residue polypeptide: Orphan steroid hormone receptor 2 (583 aa).

The segment at residues 84-159 (IELCAVCGDK…MGMKSDSVQC (76 aa)) is a DNA-binding region (nuclear receptor). 2 NR C4-type zinc fingers span residues 87–107 (CAVC…CEGC) and 123–142 (CRGN…CQYC). Residues 248–563 (TLASVVTSLA…SIIPYILRME (316 aa)) enclose the NR LBD domain.

Belongs to the nuclear hormone receptor family. NR2 subfamily. In terms of assembly, binds DNA as a monomer. In terms of tissue distribution, expressed uniformly in the early embryo. In contrast, larval expression is localized to the epaulettes and mouth epithelium. Expressed in multiple adult organs including lantern muscle, tubefeet, intestine, coelomocytes and gonads. In the adult ovaries and testes, expression is specifically localized to the smooth muscle epithelial layer of cells which surround the ovarioles and acini, respectively (at protein level).

The protein localises to the cytoplasm. Its subcellular location is the nucleus. Functionally, orphan nuclear receptor. Binds to the hormone response element in the upstream promoter region of the CYIIIB gene in vitro. Both isoform 1 and isoform 2 bind DNA. In Strongylocentrotus purpuratus (Purple sea urchin), this protein is Orphan steroid hormone receptor 2.